A 353-amino-acid chain; its full sequence is Very-long-chain 3-oxoacyl-CoA reductase (353 aa).

The helical transmembrane segment at 33–53 (AAWALIAAGGFFVISRALLFG) threads the bilayer. NADP(+) contacts are provided by Val-78, Asp-133, Asp-141, Asn-160, Tyr-227, Lys-231, Ile-260, and Ser-262. Tyr-227 (proton donor) is an active-site residue. The Lowers pKa of active site Tyr role is filled by Lys-231.

Belongs to the short-chain dehydrogenases/reductases (SDR) family.

The protein resides in the endoplasmic reticulum membrane. The catalysed reaction is a very-long-chain (3R)-3-hydroxyacyl-CoA + NADP(+) = a very-long-chain 3-oxoacyl-CoA + NADPH + H(+). Its pathway is lipid metabolism; fatty acid biosynthesis. In terms of biological role, component of the microsomal membrane bound fatty acid elongation system, which produces the 26-carbon very long-chain fatty acids (VLCFA) from palmitate. Catalyzes the reduction of the 3-ketoacyl-CoA intermediate that is formed in each cycle of fatty acid elongation. VLCFAs serve as precursors for ceramide and sphingolipids. The sequence is that of Very-long-chain 3-oxoacyl-CoA reductase from Aspergillus terreus (strain NIH 2624 / FGSC A1156).